A 423-amino-acid polypeptide reads, in one-letter code: Adenylosuccinate synthetase (423 aa).

GTP is bound by residues 12–18 (GDEGKGK) and 40–42 (GHT). The Proton acceptor role is filled by Asp13. The Mg(2+) site is built by Asp13 and Gly40. IMP is bound by residues 13–16 (DEGK), 38–41 (NAGH), Thr129, Arg143, Gln221, Thr236, and Arg300. His41 serves as the catalytic Proton donor. 296–302 (AVTGRKR) is a binding site for substrate. GTP-binding positions include Arg302, 328–330 (KSD), and 408–410 (SVG).

This sequence belongs to the adenylosuccinate synthetase family. As to quaternary structure, homodimer. Mg(2+) serves as cofactor.

The protein resides in the cytoplasm. The enzyme catalyses IMP + L-aspartate + GTP = N(6)-(1,2-dicarboxyethyl)-AMP + GDP + phosphate + 2 H(+). The protein operates within purine metabolism; AMP biosynthesis via de novo pathway; AMP from IMP: step 1/2. In terms of biological role, plays an important role in the de novo pathway of purine nucleotide biosynthesis. Catalyzes the first committed step in the biosynthesis of AMP from IMP. The protein is Adenylosuccinate synthetase of Parabacteroides distasonis (strain ATCC 8503 / DSM 20701 / CIP 104284 / JCM 5825 / NCTC 11152).